The sequence spans 168 residues: 3-dehydroquinate dehydratase (168 aa).

Residue tyrosine 22 is the Proton acceptor of the active site. Positions 76, 82, and 89 each coordinate substrate. Residue histidine 102 is the Proton donor of the active site. Residues 103–104 and arginine 113 each bind substrate; that span reads LT.

This sequence belongs to the type-II 3-dehydroquinase family. As to quaternary structure, homododecamer.

The enzyme catalyses 3-dehydroquinate = 3-dehydroshikimate + H2O. It participates in metabolic intermediate biosynthesis; chorismate biosynthesis; chorismate from D-erythrose 4-phosphate and phosphoenolpyruvate: step 3/7. In terms of biological role, catalyzes a trans-dehydration via an enolate intermediate. In Helicobacter acinonychis (strain Sheeba), this protein is 3-dehydroquinate dehydratase.